The sequence spans 550 residues: Methionine--tRNA ligase (550 aa).

Residues 13–23 carry the 'HIGH' region motif; it reads PYANGEIHLGH. The Zn(2+) site is built by cysteine 144, cysteine 147, cysteine 157, and cysteine 160. Positions 329-333 match the 'KMSKS' region motif; that stretch reads KMSKS. Lysine 332 contributes to the ATP binding site.

Belongs to the class-I aminoacyl-tRNA synthetase family. MetG type 1 subfamily. As to quaternary structure, monomer. Zn(2+) is required as a cofactor.

The protein resides in the cytoplasm. The catalysed reaction is tRNA(Met) + L-methionine + ATP = L-methionyl-tRNA(Met) + AMP + diphosphate. Is required not only for elongation of protein synthesis but also for the initiation of all mRNA translation through initiator tRNA(fMet) aminoacylation. The chain is Methionine--tRNA ligase from Ruthia magnifica subsp. Calyptogena magnifica.